The chain runs to 275 residues: Penicillin-insensitive murein endopeptidase (275 aa).

Positions 1-19 (MKKWIAGLLALIAISPVMA) are cleaved as a signal peptide. Cystine bridges form between Cys44/Cys264, Cys187/Cys235, and Cys216/Cys223. Zn(2+) contacts are provided by His110, His113, Asp120, Asp147, and His211. Residues 234–262 (GCGAELESWFQPHQPSAKPGKTLPPPLPP) are disordered.

The protein belongs to the peptidase M74 family. As to quaternary structure, dimer. Requires Zn(2+) as cofactor.

Its subcellular location is the periplasm. Its function is as follows. Murein endopeptidase that cleaves the D-alanyl-meso-2,6-diamino-pimelyl amide bond that connects peptidoglycan strands. Likely plays a role in the removal of murein from the sacculus. In Yersinia enterocolitica serotype O:8 / biotype 1B (strain NCTC 13174 / 8081), this protein is Penicillin-insensitive murein endopeptidase.